The sequence spans 127 residues: Large ribosomal subunit protein bL12c (127 aa).

The segment at 104–127 (GVAKDAAEEAKKQIEDAGGKASLK) is disordered. Over residues 105–121 (VAKDAAEEAKKQIEDAG) the composition is skewed to basic and acidic residues.

This sequence belongs to the bacterial ribosomal protein bL12 family. Homodimer. Part of the ribosomal stalk of the 50S ribosomal subunit. Forms a multimeric L10(L12)X complex, where L10 forms an elongated spine to which 2 to 4 L12 dimers bind in a sequential fashion. Binds GTP-bound translation factors.

Its subcellular location is the plastid. The protein localises to the chloroplast. Forms part of the ribosomal stalk which helps the ribosome interact with GTP-bound translation factors. Is thus essential for accurate translation. The protein is Large ribosomal subunit protein bL12c of Trieres chinensis (Marine centric diatom).